We begin with the raw amino-acid sequence, 481 residues long: Adenosylhomocysteinase (481 aa).

The substrate site is built by threonine 65, aspartate 140, and glutamate 200. 201 to 203 (TTT) contacts NAD(+). 2 residues coordinate substrate: lysine 230 and aspartate 234. Residues asparagine 235, 264 to 269 (GYGDVG), glutamate 287, asparagine 322, 343 to 345 (IGH), and asparagine 393 each bind NAD(+).

Belongs to the adenosylhomocysteinase family. It depends on NAD(+) as a cofactor.

Its subcellular location is the cytoplasm. It carries out the reaction S-adenosyl-L-homocysteine + H2O = L-homocysteine + adenosine. The protein operates within amino-acid biosynthesis; L-homocysteine biosynthesis; L-homocysteine from S-adenosyl-L-homocysteine: step 1/1. Functionally, may play a key role in the regulation of the intracellular concentration of adenosylhomocysteine. The protein is Adenosylhomocysteinase of Polynucleobacter asymbioticus (strain DSM 18221 / CIP 109841 / QLW-P1DMWA-1) (Polynucleobacter necessarius subsp. asymbioticus).